The chain runs to 842 residues: Envelope glycoprotein H (842 aa).

A signal peptide spans 1-20; it reads MRRPLCAALLAAAVLALAAG. Over 21 to 802 the chain is Virion surface; sequence APAAARGGAG…AGHEAPTFSP (782 aa). 2 N-linked (GlcNAc...) asparagine; by host glycosylation sites follow: Asn77 and Asn112. The interaction with gL stretch occupies residues 240-303; it reads ERAAARLAVG…AAGPQRRAYV (64 aa). Asn617, Asn666, Asn760, and Asn783 each carry an N-linked (GlcNAc...) asparagine; by host glycan. The chain crosses the membrane as a helical span at residues 803–823; sequence AYVWASVGGALVAGTTIYAIA. Topologically, residues 824–842 are intravirion; that stretch reads KMLCSSVPLARGYSSVPVF.

This sequence belongs to the herpesviridae glycoprotein H family. Interacts with glycoprotein L (gL); this interaction is necessary for the correct processing and cell surface expression of gH. The heterodimer gH/gL seems to interact with gB trimers during fusion. Post-translationally, N-glycosylated, O-glycosylated, and sialylated.

Its subcellular location is the virion membrane. The protein localises to the host cell membrane. It is found in the host endosome membrane. The heterodimer glycoprotein H-glycoprotein L is required for the fusion of viral and plasma membranes leading to virus entry into the host cell. Following initial binding to host receptor, membrane fusion is mediated by the fusion machinery composed of gB and the heterodimer gH/gL. May also be involved in the fusion between the virion envelope and the outer nuclear membrane during virion morphogenesis. The protein is Envelope glycoprotein H of Bos taurus (Bovine).